Consider the following 85-residue polypeptide: Phosphocarrier protein HPr (85 aa).

The HPr domain maps to 1 to 85; sequence MFQKEIKINA…HLSKIMTELE (85 aa). His15 acts as the Pros-phosphohistidine intermediate in catalysis.

The protein belongs to the HPr family.

It localises to the cytoplasm. In terms of biological role, general (non sugar-specific) component of the phosphoenolpyruvate-dependent sugar phosphotransferase system (sugar PTS). This major carbohydrate active-transport system catalyzes the phosphorylation of incoming sugar substrates concomitantly with their translocation across the cell membrane. The phosphoryl group from phosphoenolpyruvate (PEP) is transferred to the phosphoryl carrier protein HPr by enzyme I. Phospho-HPr then transfers it to the PTS EIIA domain. The chain is Phosphocarrier protein HPr (ptsH) from Buchnera aphidicola subsp. Schizaphis graminum (strain Sg).